Here is a 215-residue protein sequence, read N- to C-terminus: Adenylate kinase (215 aa).

Residue 10–15 (GAGKGT) coordinates ATP. The segment at 30-59 (STGDMLRAAIKAGTPLGLEAKKIIDEGGLV) is NMP. AMP contacts are provided by residues Thr31, Arg36, 57 to 59 (GLV), 85 to 88 (GFPR), and Gln92. The tract at residues 122-159 (GRRVHLASGRTYHVTYNPPKVEGKDDVTGEDLIQRDDD) is LID. Residues Arg123 and 132-133 (TY) contribute to the ATP site. Residues Arg156 and Arg167 each contribute to the AMP site. Residue Gln200 participates in ATP binding.

Belongs to the adenylate kinase family. As to quaternary structure, monomer.

The protein localises to the cytoplasm. The enzyme catalyses AMP + ATP = 2 ADP. Its pathway is purine metabolism; AMP biosynthesis via salvage pathway; AMP from ADP: step 1/1. Its function is as follows. Catalyzes the reversible transfer of the terminal phosphate group between ATP and AMP. Plays an important role in cellular energy homeostasis and in adenine nucleotide metabolism. The polypeptide is Adenylate kinase (Neisseria meningitidis serogroup B (strain ATCC BAA-335 / MC58)).